Consider the following 170-residue polypeptide: MTVPSRGETPGPPAQDRLTHIDEAGAARMVDVSGKDVTARTARASGRVLVSPRVVELLRGEGVPKGDALATARIAGIMGAKRTPDLIPLCHPLSVSGVKLDLSVADDAVEILATVKTTDRTGVEMEALTAVSVAALTVIDMVKAVDKGAVITDVRVEEKTGGKSGDWSRS.

Residues 89–91 (LCH) and 125–126 (ME) each bind substrate. Residue D140 is part of the active site.

The protein belongs to the MoaC family. Homohexamer; trimer of dimers.

It carries out the reaction (8S)-3',8-cyclo-7,8-dihydroguanosine 5'-triphosphate = cyclic pyranopterin phosphate + diphosphate. Its pathway is cofactor biosynthesis; molybdopterin biosynthesis. Catalyzes the conversion of (8S)-3',8-cyclo-7,8-dihydroguanosine 5'-triphosphate to cyclic pyranopterin monophosphate (cPMP). This chain is Cyclic pyranopterin monophosphate synthase, found in Streptomyces avermitilis (strain ATCC 31267 / DSM 46492 / JCM 5070 / NBRC 14893 / NCIMB 12804 / NRRL 8165 / MA-4680).